The sequence spans 454 residues: MVRLAAELLLLLGLLLLTLHITVLRGSGASDRQDAAAGNNNLNLESDSTSETSFPLSKEAPEEHQVVHQPFPRQRFPPETGHPSLQRDGPRSFLLDLPNFPDLSKADINGQNPNIQVTIEVVDGPDSEAEKDQHPENKPSWSLPAPDWRAWWQRSLSLARTNSGDQDDKYDSTSDDSNFLSVPRGWDRPAPGHRTFETKEQPEYDSTDGEGDWSLWSVCSVTCGNGNQKRTRSCGYACIATESRTCDRPNCPGIEDTFRTAATEVSLLAGSEEFNATKLFEVDMDSCERWMSCKSEFLKKYMHKVINDLPSCPCSYPTEVAYSTADIFDRIKRKDFRWKDASGPKEKLEIYKPTARYCIRSMLSLESTTLAAQHCCYGDNMQLITRGKGAGTPNLISTEFSAELHYKVDVLPWIICKGDWSRYNEARPPNNGQKCTESPSDEDYIKQFQEAREY.

An N-terminal signal peptide occupies residues 1-29 (MVRLAAELLLLLGLLLLTLHITVLRGSGA). 3 disordered regions span residues 29-93 (ASDR…PRSF), 125-144 (PDSE…WSLP), and 161-209 (TNSG…STDG). Residues 38–55 (GNNNLNLESDSTSETSFP) show a composition bias toward polar residues. Basic and acidic residues predominate over residues 128-137 (EAEKDQHPEN). The 45-residue stretch at 208–252 (DGEGDWSLWSVCSVTCGNGNQKRTRSCGYACIATESRTCDRPNCP) folds into the TSP type-1 domain. Intrachain disulfides connect C219/C246, C223/C251, and C234/C238. The AMOP domain occupies 279–442 (LFEVDMDSCE…QKCTESPSDE (164 aa)).

The protein belongs to the isthmin family. In terms of assembly, interacts with integrin ITGAV/ITGB5.

The protein resides in the secreted. In terms of biological role, acts as an angiogenesis inhibitor. This Mus musculus (Mouse) protein is Isthmin-1 (Ism1).